Consider the following 87-residue polypeptide: Homeotic protein ultrabithorax (87 aa).

An Antp-type hexapeptide motif is present at residues 22 to 27 (FYPWMA).

Belongs to the Antp homeobox family. In the embryo, expression is seen in the epidermis, somatic and visceral mesoderm, and the peripheral and central nervous system.

Its subcellular location is the nucleus. In terms of biological role, sequence-specific transcription factor which is part of a developmental regulatory system that provides cells with specific positional identities on the anterior-posterior axis. Binds the consensus region 5'-TTAAT[GT][GA]-3'. This homeotic protein controls development of the cells in the posterior thoracic and first abdominal segments. It activates the synthesis of the decapentaplegic (DPP) growth factor. This is Homeotic protein ultrabithorax (Ubx) from Drosophila hydei (Fruit fly).